The following is a 132-amino-acid chain: Large ribosomal subunit protein bL17 (132 aa).

The protein belongs to the bacterial ribosomal protein bL17 family. Part of the 50S ribosomal subunit. Contacts protein L32.

The chain is Large ribosomal subunit protein bL17 from Anaplasma phagocytophilum (strain HZ).